The primary structure comprises 800 residues: Phenylalanine--tRNA ligase beta subunit (800 aa).

The tRNA-binding domain maps to 39 to 152; it reads AAGLSKIVVG…EDAVPGEEVF (114 aa). The 76-residue stretch at 405–480 folds into the B5 domain; the sequence is TSDVEVSSTL…RIYGYDRLPT (76 aa). Residues Asp-458, Asp-464, Glu-467, and Glu-468 each contribute to the Mg(2+) site. In terms of domain architecture, FDX-ACB spans 707–800; it reads TKFPAVSRDV…LEEKVNAEVR (94 aa).

It belongs to the phenylalanyl-tRNA synthetase beta subunit family. Type 1 subfamily. Tetramer of two alpha and two beta subunits. Mg(2+) serves as cofactor.

Its subcellular location is the cytoplasm. It carries out the reaction tRNA(Phe) + L-phenylalanine + ATP = L-phenylalanyl-tRNA(Phe) + AMP + diphosphate + H(+). This is Phenylalanine--tRNA ligase beta subunit from Streptococcus pneumoniae (strain ATCC BAA-255 / R6).